Reading from the N-terminus, the 1042-residue chain is Isoleucine--tRNA ligase (1042 aa).

A 'HIGH' region motif is present at residues P48–H58. Positions K594–S598 match the 'KMSKS' region motif. An ATP-binding site is contributed by K597.

It belongs to the class-I aminoacyl-tRNA synthetase family. IleS type 2 subfamily. As to quaternary structure, monomer. Zn(2+) is required as a cofactor.

The protein resides in the cytoplasm. The enzyme catalyses tRNA(Ile) + L-isoleucine + ATP = L-isoleucyl-tRNA(Ile) + AMP + diphosphate. Functionally, catalyzes the attachment of isoleucine to tRNA(Ile). As IleRS can inadvertently accommodate and process structurally similar amino acids such as valine, to avoid such errors it has two additional distinct tRNA(Ile)-dependent editing activities. One activity is designated as 'pretransfer' editing and involves the hydrolysis of activated Val-AMP. The other activity is designated 'posttransfer' editing and involves deacylation of mischarged Val-tRNA(Ile). In Borreliella burgdorferi (strain ZS7) (Borrelia burgdorferi), this protein is Isoleucine--tRNA ligase.